A 529-amino-acid polypeptide reads, in one-letter code: BTB/POZ domain-containing protein 6 (529 aa).

Positions 127–197 (ADVHFIVGPA…LYSDEIDLEA (71 aa)) constitute a BTB domain.

In terms of assembly, homodimer and heterodimer. Interacts with cul3 via the BTB domain.

The protein localises to the cytoplasm. Functionally, adapter protein for the cul3 E3 ubiquitin-protein ligase complex. Involved in late neuronal development and muscle formation. This chain is BTB/POZ domain-containing protein 6 (btbd6), found in Xenopus laevis (African clawed frog).